We begin with the raw amino-acid sequence, 218 residues long: Octanoyltransferase (218 aa).

One can recognise a BPL/LPL catalytic domain in the interval 31 to 206; the sequence is REAGDEVWLV…QLVKHLDYAE (176 aa). Substrate contacts are provided by residues 70–77, 137–139, and 150–152; these read RGGQVTYH, SLG, and GLA. Cys-168 functions as the Acyl-thioester intermediate in the catalytic mechanism.

The protein belongs to the LipB family.

The protein localises to the cytoplasm. The catalysed reaction is octanoyl-[ACP] + L-lysyl-[protein] = N(6)-octanoyl-L-lysyl-[protein] + holo-[ACP] + H(+). The protein operates within protein modification; protein lipoylation via endogenous pathway; protein N(6)-(lipoyl)lysine from octanoyl-[acyl-carrier-protein]: step 1/2. Catalyzes the transfer of endogenously produced octanoic acid from octanoyl-acyl-carrier-protein onto the lipoyl domains of lipoate-dependent enzymes. Lipoyl-ACP can also act as a substrate although octanoyl-ACP is likely to be the physiological substrate. The protein is Octanoyltransferase of Pseudomonas syringae pv. tomato (strain ATCC BAA-871 / DC3000).